A 309-amino-acid chain; its full sequence is Homoserine O-succinyltransferase (309 aa).

Residue cysteine 142 is the Acyl-thioester intermediate of the active site. Substrate contacts are provided by lysine 163 and serine 192. The active-site Proton acceptor is the histidine 235. Glutamate 237 is an active-site residue. Arginine 249 lines the substrate pocket.

Belongs to the MetA family.

The protein localises to the cytoplasm. It carries out the reaction L-homoserine + succinyl-CoA = O-succinyl-L-homoserine + CoA. It participates in amino-acid biosynthesis; L-methionine biosynthesis via de novo pathway; O-succinyl-L-homoserine from L-homoserine: step 1/1. Functionally, transfers a succinyl group from succinyl-CoA to L-homoserine, forming succinyl-L-homoserine. The sequence is that of Homoserine O-succinyltransferase from Pectobacterium carotovorum subsp. carotovorum (strain PC1).